We begin with the raw amino-acid sequence, 499 residues long: Glutamyl-tRNA(Gln) amidotransferase subunit A (499 aa).

Residues Lys76 and Ser151 each act as charge relay system in the active site. Ser175 (acyl-ester intermediate) is an active-site residue.

Belongs to the amidase family. GatA subfamily. As to quaternary structure, heterotrimer of A, B and C subunits.

The enzyme catalyses L-glutamyl-tRNA(Gln) + L-glutamine + ATP + H2O = L-glutaminyl-tRNA(Gln) + L-glutamate + ADP + phosphate + H(+). In terms of biological role, allows the formation of correctly charged Gln-tRNA(Gln) through the transamidation of misacylated Glu-tRNA(Gln) in organisms which lack glutaminyl-tRNA synthetase. The reaction takes place in the presence of glutamine and ATP through an activated gamma-phospho-Glu-tRNA(Gln). The chain is Glutamyl-tRNA(Gln) amidotransferase subunit A from Rhodopirellula baltica (strain DSM 10527 / NCIMB 13988 / SH1).